Here is a 382-residue protein sequence, read N- to C-terminus: Alkanesulfonate monooxygenase (382 aa).

It belongs to the SsuD family.

The catalysed reaction is an alkanesulfonate + FMNH2 + O2 = an aldehyde + FMN + sulfite + H2O + 2 H(+). Its function is as follows. Catalyzes the desulfonation of aliphatic sulfonates. This is Alkanesulfonate monooxygenase from Pseudomonas putida (strain ATCC 47054 / DSM 6125 / CFBP 8728 / NCIMB 11950 / KT2440).